A 51-amino-acid polypeptide reads, in one-letter code: MHGACLSGLYPLPFTHKFHDYLHFNIYISFGGPKYCITALNTYVILFYTVY.

The protein belongs to the UPF0320 family.

This is UPF0320 protein YOL166W-A from Saccharomyces cerevisiae (strain ATCC 204508 / S288c) (Baker's yeast).